Reading from the N-terminus, the 182-residue chain is HGPRTase-like protein 1 (182 aa).

Belongs to the purine/pyrimidine phosphoribosyltransferase family. Archaeal HPRT subfamily.

Its function is as follows. May catalyze a purine salvage reaction, the substrate is unknown. The chain is HGPRTase-like protein 1 from Haloarcula marismortui (strain ATCC 43049 / DSM 3752 / JCM 8966 / VKM B-1809) (Halobacterium marismortui).